The chain runs to 418 residues: Gamma-glutamyl phosphate reductase (418 aa).

It belongs to the gamma-glutamyl phosphate reductase family.

Its subcellular location is the cytoplasm. The catalysed reaction is L-glutamate 5-semialdehyde + phosphate + NADP(+) = L-glutamyl 5-phosphate + NADPH + H(+). The protein operates within amino-acid biosynthesis; L-proline biosynthesis; L-glutamate 5-semialdehyde from L-glutamate: step 2/2. Its function is as follows. Catalyzes the NADPH-dependent reduction of L-glutamate 5-phosphate into L-glutamate 5-semialdehyde and phosphate. The product spontaneously undergoes cyclization to form 1-pyrroline-5-carboxylate. The polypeptide is Gamma-glutamyl phosphate reductase (Histophilus somni (strain 2336) (Haemophilus somnus)).